Here is a 243-residue protein sequence, read N- to C-terminus: Triosephosphate isomerase (243 aa).

9–11 provides a ligand contact to substrate; that stretch reads NWK. Residue H96 is the Electrophile of the active site. E165 acts as the Proton acceptor in catalysis. Substrate is bound by residues G171, S204, and 225–226; that span reads GG.

Belongs to the triosephosphate isomerase family. In terms of assembly, homodimer.

The protein resides in the cytoplasm. The catalysed reaction is D-glyceraldehyde 3-phosphate = dihydroxyacetone phosphate. It functions in the pathway carbohydrate biosynthesis; gluconeogenesis. The protein operates within carbohydrate degradation; glycolysis; D-glyceraldehyde 3-phosphate from glycerone phosphate: step 1/1. Its function is as follows. Involved in the gluconeogenesis. Catalyzes stereospecifically the conversion of dihydroxyacetone phosphate (DHAP) to D-glyceraldehyde-3-phosphate (G3P). The chain is Triosephosphate isomerase from Synechococcus sp. (strain CC9902).